A 328-amino-acid polypeptide reads, in one-letter code: Pancreas transcription factor 1 subunit alpha (328 aa).

The bHLH domain occupies 163–215 (QLRQAANVRERRRMQSINDAFEGLRSHIPTLPYEKRLSKVDTLRLAIGYINFL). Disordered regions lie at residues 259-278 (RGTRSPSPSDPDYGLPPLAG) and 305-328 (DPRKLNSKSSFNNIENEPPFEFVS).

In terms of assembly, component of the pancreas transcription factor 1 complex (PTF1) which is composed of TCF3/p75, TCF12/p64 and PTF1A/p48. TCF3 is responsible for the nuclear import of the p48/p64 complex. Interacts with TCF3 and RBPSUH/RBP-Jkappa. In terms of tissue distribution, pancreas-specific (at protein level). Loss of expression is seen in ductal type pancreas cancers.

The protein resides in the nucleus. Its subcellular location is the cytoplasm. Functionally, transcription factor implicated in the cell fate determination in various organs. Binds to the E-box consensus sequence 5'-CANNTG-3'. Plays a role in early and late pancreas development and differentiation. Important for determining whether cells allocated to the pancreatic buds continue towards pancreatic organogenesis or revert back to duodenal fates. May be involved in the maintenance of exocrine pancreas-specific gene expression including ELA1 and amylase. Required for the formation of pancreatic acinar and ductal cells. Plays an important role in cerebellar development. Directly regulated by FOXN4 and RORC during retinal development, FOXN4-PTF1A pathway plays a central role in directing the differentiation of retinal progenitors towards horizontal and amacrine fates. The polypeptide is Pancreas transcription factor 1 subunit alpha (PTF1A) (Homo sapiens (Human)).